Here is a 594-residue protein sequence, read N- to C-terminus: MKSYSQFNLNAAAPPAIAYETTVVNPNGSPLDPHQQQQQQSQDMPHFGLPGPQPPSSQQQQQQLQVHHQQQQQQQQQQQQQQHQQQMQMSLLPGPYRPHIEEKKLTRDAMEKYMRERNDMVIVILHAKVAQKSYGNEKRFFCPPPCIYLFGSGWRRRYEEMLQQGEGEQGAQLCAFIGIGSSDQDMQQLDLNGKQYCAAKTLFISDSDKRKHFMLSVKMFYGNGHDIGVFNSKRIKVISKPSKKKQSLKNADLCIASGTNVALFNRLRSQTVSTRYLHVENGHFHASSTQWGAFTIHLLDDNESESEEFQVRDGYIHYGATVKLVCSVTGMALPRLIIRKVDKQMALLEADDPVSQLHKCAFYMKDTDRMYLCLSQEKIIQFQATPCPKEPNKEMINDGACWTIISTDKAEYQFYEGMGPVASPVTPVPIVNSLNLNGGGDVAMLELSGDNFTPHLQVWFGDVEAETMYRCTETLLCVVPEISQFRGEWLWVRQPTQVPISLVRNDGIIYATGLTFTYTPEPGPRPHCNTQAEDVMRARQNNNNNNITSISNNNNSNNAGSPAAGGGLQQQQQQHQALPSISEVQWNSHGSGLS.

Residues 20–87 (ETTVVNPNGS…QQQQQHQQQM (68 aa)) form a disordered region. Residues 58–87 (QQQQQQLQVHHQQQQQQQQQQQQQQHQQQM) are compositionally biased toward low complexity. 3 DNA-binding regions span residues 131 to 141 (QKSYGNEKRFF), 239 to 244 (SKPSKK), and 266 to 271 (RLRSQT). One can recognise an IPT/TIG domain in the interval 429–519 (PIVNSLNLNG…YATGLTFTYT (91 aa)). 2 stretches are compositionally biased toward low complexity: residues 542–562 (NNNNNITSISNNNNSNNAGSP) and 569–580 (QQQQQQHQALPS). The disordered stretch occupies residues 542 to 594 (NNNNNITSISNNNNSNNAGSPAAGGGLQQQQQQHQALPSISEVQWNSHGSGLS). Residues 582 to 594 (SEVQWNSHGSGLS) show a composition bias toward polar residues.

Belongs to the Su(H) family. In terms of assembly, interacts with activated cleaved Notch. Interacts with Hairless, this interaction preventing its DNA-binding activity. Interacts with insv (via BEN domain).

Its subcellular location is the nucleus. It is found in the cytoplasm. Transcriptional regulator that plays a central role in Notch signaling, a signaling pathway involved in cell-cell communication that regulates a broad spectrum of cell-fate determinations. Binds directly the 5'-GTGRGAR-3' DNA consensus sequence, which is present in the regulatory region of several genes. Acts as a transcriptional repressor when it is not associated with Notch proteins. When associated with some Notch protein, it acts as a transcriptional activator that activates transcription of Notch target genes. Required for transcription of Sim. Specifically binds to the immunoglobulin kappa-type J segment recombination signal sequence. Required for neurogenesis in imaginal disks. In the larval brain, might play a role as a transducer of Notch signaling during type II neuroblast development. Also functions independently of the Notch pathway, in the development of the bristle sensory organ precursor cell. The polypeptide is Suppressor of hairless protein (Su(H)) (Drosophila melanogaster (Fruit fly)).